A 211-amino-acid chain; its full sequence is 2,3-bisphosphoglycerate-dependent phosphoglycerate mutase (211 aa).

Residues 9 to 16, 22 to 23, Arg61, 88 to 91, Lys99, 115 to 116, and 159 to 160 each bind substrate; these read RHGQSDWN, TG, ERDY, RR, and GN. Catalysis depends on His10, which acts as the Tele-phosphohistidine intermediate. Catalysis depends on Glu88, which acts as the Proton donor/acceptor.

The protein belongs to the phosphoglycerate mutase family. BPG-dependent PGAM subfamily. As to quaternary structure, homodimer.

The enzyme catalyses (2R)-2-phosphoglycerate = (2R)-3-phosphoglycerate. The protein operates within carbohydrate degradation; glycolysis; pyruvate from D-glyceraldehyde 3-phosphate: step 3/5. Catalyzes the interconversion of 2-phosphoglycerate and 3-phosphoglycerate. The polypeptide is 2,3-bisphosphoglycerate-dependent phosphoglycerate mutase (Rhizobium etli (strain CIAT 652)).